A 346-amino-acid chain; its full sequence is Uroporphyrinogen decarboxylase (346 aa).

Residues 21–25 (RQAGR), Phe-40, Asp-71, Tyr-146, Ser-201, and His-316 each bind substrate.

This sequence belongs to the uroporphyrinogen decarboxylase family. As to quaternary structure, homodimer.

The protein localises to the cytoplasm. It carries out the reaction uroporphyrinogen III + 4 H(+) = coproporphyrinogen III + 4 CO2. Its pathway is porphyrin-containing compound metabolism; protoporphyrin-IX biosynthesis; coproporphyrinogen-III from 5-aminolevulinate: step 4/4. Catalyzes the decarboxylation of four acetate groups of uroporphyrinogen-III to yield coproporphyrinogen-III. The chain is Uroporphyrinogen decarboxylase from Rickettsia conorii (strain ATCC VR-613 / Malish 7).